A 66-amino-acid chain; its full sequence is Large ribosomal subunit protein bL33c (66 aa).

Belongs to the bacterial ribosomal protein bL33 family.

The protein resides in the plastid. The chain is Large ribosomal subunit protein bL33c (rpl33) from Epifagus virginiana (Beechdrops).